The primary structure comprises 45 residues: Large ribosomal subunit protein bL34 (45 aa).

The protein belongs to the bacterial ribosomal protein bL34 family.

This is Large ribosomal subunit protein bL34 from Prochlorococcus marinus (strain MIT 9313).